The chain runs to 308 residues: Adipolin (308 aa).

The N-terminal stretch at 1 to 21 (MWAWGWAAAALLWLQTAGAGA) is a signal peptide. The segment at 36–119 (DSPNITTSNR…PPGSPGVGVT (84 aa)) is disordered. Residue Asn-39 is glycosylated (N-linked (GlcNAc...) asparagine). Residues 82 to 93 (RKRCRGRDKKSR) show a composition bias toward basic residues. The span at 99-113 (PGPPGPPGPPGPPGS) shows a compositional bias: pro residues. The C1q domain occupies 153–308 (QRLVVEAFYC…SSFSGMLLGT (156 aa)).

This sequence belongs to the adipolin/erythroferrone family. As to quaternary structure, homomultimer; disulfide-linked. Adipolin fC1QTNF12: homotrimer; disulfide-linked. Adipolin gC1QTNF12: homodimer; disulfide-linked. May interact with ERFE. Processed into Adipolin fC1QTNF12 and Adipolin gC1QTNF12 by FURIN. Insulin enhances endogenous C1QTNF12 cleavage. In terms of tissue distribution, widely expressed, with high expression in subcutaneous and epididymal white adipose tissues and brown adipose tissue. Expressed in adipocytes (at protein level).

The protein localises to the secreted. Its function is as follows. Insulin-sensitizing adipocyte-secreted protein (adipokine) that regulates glucose metabolism in liver and adipose tissue. Promotes glucose uptake in adipocytes and suppresses de novo glucose production in hepatocytes via the PI3K-Akt signaling pathway. Administration lead to reduction of blood glucose. Able to attenuate inflammation in fat tissue. In terms of biological role, acts by activating the Akt signaling in hepatocytes and adipocytes. Not able to increase insulin-stimulated glucose uptake in adipocytes. Acts by activating the MAP kinase. Increases insulin-stimulated glucose uptake in adipocytes. The polypeptide is Adipolin (C1qtnf12) (Mus musculus (Mouse)).